The following is a 305-amino-acid chain: Carbonic anhydrase 4 (305 aa).

Residues Met1–Thr17 form the signal peptide. The Alpha-carbonic anhydrase domain maps to Ser20–His278. Cystine bridges form between Cys23–Cys35 and Cys45–Cys222. Catalysis depends on His87, which acts as the Proton donor/acceptor. Positions 114 and 116 each coordinate Zn(2+). Asn123 carries N-linked (GlcNAc...) asparagine glycosylation. Residue His139 participates in Zn(2+) binding. Asn214 carries N-linked (GlcNAc...) asparagine glycosylation. Substrate is bound at residue Thr218–Thr219. The GPI-anchor amidated serine moiety is linked to residue Ser277. The propeptide at His278–Gln305 is removed in mature form.

The protein belongs to the alpha-carbonic anhydrase family. In terms of assembly, interacts with SLC4A4. The cofactor is Zn(2+).

It is found in the cell membrane. It catalyses the reaction hydrogencarbonate + H(+) = CO2 + H2O. With respect to regulation, inhibited by acetazolamide. Catalyzes the reversible hydration of carbon dioxide into bicarbonate and protons and thus is essential to maintaining intracellular and extracellular pH. May stimulate the sodium/bicarbonate transporter activity of SLC4A4 that acts in pH homeostasis. It is essential for acid overload removal from the retina and retina epithelium, and acid release in the choriocapillaris in the choroid. The chain is Carbonic anhydrase 4 (Ca4) from Mus musculus (Mouse).